Reading from the N-terminus, the 358-residue chain is NADH-quinone oxidoreductase subunit H (358 aa).

A run of 8 helical transmembrane segments spans residues 20 to 40, 95 to 115, 128 to 148, 168 to 188, 206 to 226, 253 to 273, 295 to 315, and 334 to 354; these read ITVG…IPLI, ALFY…WAVI, IGLL…IIAG, ISYE…SGSM, VFSW…ISAV, GFAF…IAAL, TPSA…YLWI, and VLIP…ISPL.

It belongs to the complex I subunit 1 family. In terms of assembly, NDH-1 is composed of 14 different subunits. Subunits NuoA, H, J, K, L, M, N constitute the membrane sector of the complex.

It localises to the cell inner membrane. The catalysed reaction is a quinone + NADH + 5 H(+)(in) = a quinol + NAD(+) + 4 H(+)(out). In terms of biological role, NDH-1 shuttles electrons from NADH, via FMN and iron-sulfur (Fe-S) centers, to quinones in the respiratory chain. The immediate electron acceptor for the enzyme in this species is believed to be ubiquinone. Couples the redox reaction to proton translocation (for every two electrons transferred, four hydrogen ions are translocated across the cytoplasmic membrane), and thus conserves the redox energy in a proton gradient. This subunit may bind ubiquinone. This Neisseria gonorrhoeae (strain ATCC 700825 / FA 1090) protein is NADH-quinone oxidoreductase subunit H.